A 295-amino-acid polypeptide reads, in one-letter code: NAD kinase (295 aa).

Asp72 functions as the Proton acceptor in the catalytic mechanism. NAD(+)-binding positions include 72–73 (DG), 146–147 (ND), Arg157, Lys174, Asp176, 187–192 (TAYALS), and Gln247.

The protein belongs to the NAD kinase family. A divalent metal cation is required as a cofactor.

The protein localises to the cytoplasm. The enzyme catalyses NAD(+) + ATP = ADP + NADP(+) + H(+). In terms of biological role, involved in the regulation of the intracellular balance of NAD and NADP, and is a key enzyme in the biosynthesis of NADP. Catalyzes specifically the phosphorylation on 2'-hydroxyl of the adenosine moiety of NAD to yield NADP. In Azotobacter vinelandii (strain DJ / ATCC BAA-1303), this protein is NAD kinase.